The primary structure comprises 204 residues: Peptidyl-tRNA hydrolase (204 aa).

Tyrosine 14 lines the tRNA pocket. The active-site Proton acceptor is histidine 19. TRNA-binding residues include phenylalanine 64, asparagine 66, and asparagine 112.

Belongs to the PTH family. Monomer.

The protein resides in the cytoplasm. It carries out the reaction an N-acyl-L-alpha-aminoacyl-tRNA + H2O = an N-acyl-L-amino acid + a tRNA + H(+). Its function is as follows. Hydrolyzes ribosome-free peptidyl-tRNAs (with 1 or more amino acids incorporated), which drop off the ribosome during protein synthesis, or as a result of ribosome stalling. Catalyzes the release of premature peptidyl moieties from peptidyl-tRNA molecules trapped in stalled 50S ribosomal subunits, and thus maintains levels of free tRNAs and 50S ribosomes. This Azorhizobium caulinodans (strain ATCC 43989 / DSM 5975 / JCM 20966 / LMG 6465 / NBRC 14845 / NCIMB 13405 / ORS 571) protein is Peptidyl-tRNA hydrolase.